The following is a 426-amino-acid chain: 3-phosphoshikimate 1-carboxyvinyltransferase (426 aa).

3-phosphoshikimate is bound by residues Lys-20, Ser-21, and Arg-25. A phosphoenolpyruvate-binding site is contributed by Lys-20. Residues Gly-92 and Arg-120 each contribute to the phosphoenolpyruvate site. 4 residues coordinate 3-phosphoshikimate: Ser-165, Gln-167, Asp-313, and Lys-340. Residue Gln-167 coordinates phosphoenolpyruvate. The Proton acceptor role is filled by Asp-313. Phosphoenolpyruvate is bound by residues Arg-344 and Arg-386.

It belongs to the EPSP synthase family. Monomer.

Its subcellular location is the cytoplasm. It catalyses the reaction 3-phosphoshikimate + phosphoenolpyruvate = 5-O-(1-carboxyvinyl)-3-phosphoshikimate + phosphate. Its pathway is metabolic intermediate biosynthesis; chorismate biosynthesis; chorismate from D-erythrose 4-phosphate and phosphoenolpyruvate: step 6/7. Its function is as follows. Catalyzes the transfer of the enolpyruvyl moiety of phosphoenolpyruvate (PEP) to the 5-hydroxyl of shikimate-3-phosphate (S3P) to produce enolpyruvyl shikimate-3-phosphate and inorganic phosphate. The polypeptide is 3-phosphoshikimate 1-carboxyvinyltransferase (Brevibacillus brevis (strain 47 / JCM 6285 / NBRC 100599)).